Reading from the N-terminus, the 245-residue chain is Biosynthetic peptidoglycan transglycosylase (245 aa).

A helical membrane pass occupies residues 29 to 49; it reads IVLAVLIVLILPYALIVFYLL.

This sequence belongs to the glycosyltransferase 51 family.

It is found in the cell inner membrane. The enzyme catalyses [GlcNAc-(1-&gt;4)-Mur2Ac(oyl-L-Ala-gamma-D-Glu-L-Lys-D-Ala-D-Ala)](n)-di-trans,octa-cis-undecaprenyl diphosphate + beta-D-GlcNAc-(1-&gt;4)-Mur2Ac(oyl-L-Ala-gamma-D-Glu-L-Lys-D-Ala-D-Ala)-di-trans,octa-cis-undecaprenyl diphosphate = [GlcNAc-(1-&gt;4)-Mur2Ac(oyl-L-Ala-gamma-D-Glu-L-Lys-D-Ala-D-Ala)](n+1)-di-trans,octa-cis-undecaprenyl diphosphate + di-trans,octa-cis-undecaprenyl diphosphate + H(+). The protein operates within cell wall biogenesis; peptidoglycan biosynthesis. In terms of biological role, peptidoglycan polymerase that catalyzes glycan chain elongation from lipid-linked precursors. In Rhizobium johnstonii (strain DSM 114642 / LMG 32736 / 3841) (Rhizobium leguminosarum bv. viciae), this protein is Biosynthetic peptidoglycan transglycosylase.